The sequence spans 209 residues: Probable GTP-binding protein EngB (209 aa).

One can recognise an EngB-type G domain in the interval 22–198 (TPLEIAFVGR…NRTVGSWFDA (177 aa)). Positions 37 and 59 each coordinate Mg(2+).

It belongs to the TRAFAC class TrmE-Era-EngA-EngB-Septin-like GTPase superfamily. EngB GTPase family. Mg(2+) is required as a cofactor.

Functionally, necessary for normal cell division and for the maintenance of normal septation. This is Probable GTP-binding protein EngB from Neisseria gonorrhoeae (strain ATCC 700825 / FA 1090).